A 297-amino-acid chain; its full sequence is MDTLPPATSEESFEIPNADVAGSAVLETETSQDIHQLEIEKDAGETDSDAGSIAMNVHQLDTAGEPLQSMNEDEVDPNNESTALDKKEPQSAPEGSENLGNDLFVSGIASRMQEDELQQIFSKFGTVTHVRIMREPVTKASRGFGFLSFSTVEEATSAIDNLNSQEFYGRVLNVQKAKRSRPHSPTPGKYMGYDRRRNSRDFPSNNKDGGYRRNNYRDRDSNRYRNSYRPSRPQREHSPGNYRKERYNVDSRPRRERHFHGRSFAHAEHHSVPNMRNDTPGNEALPSHSSVPPNEDQ.

3 disordered regions span residues 1-20 (MDTLPPATSEESFEIPNADV), 39-100 (IEKD…ENLG), and 174-297 (VQKA…NEDQ). In terms of domain architecture, RRM spans 101–179 (NDLFVSGIAS…RVLNVQKAKR (79 aa)). Serine 184 is modified (phosphoserine). Basic and acidic residues-rich tracts occupy residues 209–223 (GGYRRNNYRDRDSNR) and 233–253 (PQREHSPGNYRKERYNVDSRP). Over residues 254 to 263 (RRERHFHGRS) the composition is skewed to basic residues. Over residues 287-297 (SHSSVPPNEDQ) the composition is skewed to polar residues.

The protein resides in the nucleus. This is an uncharacterized protein from Schizosaccharomyces pombe (strain 972 / ATCC 24843) (Fission yeast).